The sequence spans 134 residues: MTIRPAYRPKIIKKRTKHFIRHQSDRYAKLSHKWRKPKGIDNRVRRRFKGQYLMPNIGYGSNKRTRHMLPTGFKKFLVHNVRELEVLLMQNRIYCGEIAHAVSSKKRKEIVERAKQLSIRLTNPNGRLRSQENE.

The protein belongs to the eukaryotic ribosomal protein eL32 family.

The sequence is that of Large ribosomal subunit protein eL32 (RpL32) from Drosophila bifasciata (Fruit fly).